The following is a 374-amino-acid chain: Putative phosphoserine aminotransferase (374 aa).

Residue R48 coordinates L-glutamate. Residues 82–83, F106, T152, D174, and Q197 each bind pyridoxal 5'-phosphate; that span reads AT. K198 bears the N6-(pyridoxal phosphate)lysine mark. 249-250 provides a ligand contact to pyridoxal 5'-phosphate; sequence NT.

Belongs to the class-V pyridoxal-phosphate-dependent aminotransferase family. SerC subfamily. Homodimer. Requires pyridoxal 5'-phosphate as cofactor.

The protein resides in the cytoplasm. It carries out the reaction O-phospho-L-serine + 2-oxoglutarate = 3-phosphooxypyruvate + L-glutamate. It catalyses the reaction 4-(phosphooxy)-L-threonine + 2-oxoglutarate = (R)-3-hydroxy-2-oxo-4-phosphooxybutanoate + L-glutamate. It functions in the pathway amino-acid biosynthesis; L-serine biosynthesis; L-serine from 3-phospho-D-glycerate: step 2/3. It participates in cofactor biosynthesis; pyridoxine 5'-phosphate biosynthesis; pyridoxine 5'-phosphate from D-erythrose 4-phosphate: step 3/5. Catalyzes the reversible conversion of 3-phosphohydroxypyruvate to phosphoserine and of 3-hydroxy-2-oxo-4-phosphonooxybutanoate to phosphohydroxythreonine. The sequence is that of Putative phosphoserine aminotransferase from Mycolicibacterium paratuberculosis (strain ATCC BAA-968 / K-10) (Mycobacterium paratuberculosis).